Reading from the N-terminus, the 312-residue chain is Probable carboxylesterase 7 (312 aa).

An N-acetylmethionine modification is found at M1. The short motif at 75 to 77 is the Involved in the stabilization of the negatively charged intermediate by the formation of the oxyanion hole element; it reads HGG. Residues S159, D255, and H287 contribute to the active site.

The protein belongs to the 'GDXG' lipolytic enzyme family. In terms of tissue distribution, expressed in leaves, stems, flowers and siliques.

The catalysed reaction is a carboxylic ester + H2O = an alcohol + a carboxylate + H(+). Functionally, carboxylesterase acting on esters with varying acyl chain length. This Arabidopsis thaliana (Mouse-ear cress) protein is Probable carboxylesterase 7 (CXE7).